We begin with the raw amino-acid sequence, 119 residues long: Holo-[acyl-carrier-protein] synthase (119 aa).

Mg(2+)-binding residues include aspartate 8 and glutamate 58.

The protein belongs to the P-Pant transferase superfamily. AcpS family. Mg(2+) is required as a cofactor.

The protein resides in the cytoplasm. The enzyme catalyses apo-[ACP] + CoA = holo-[ACP] + adenosine 3',5'-bisphosphate + H(+). Functionally, transfers the 4'-phosphopantetheine moiety from coenzyme A to a Ser of acyl-carrier-protein. This Geobacillus sp. (strain WCH70) protein is Holo-[acyl-carrier-protein] synthase.